Reading from the N-terminus, the 146-residue chain is uncharacterized protein (146 aa).

Disordered regions lie at residues 1–33 (MATF…GSYR) and 50–70 (QHWR…SWEG).

This is an uncharacterized protein from Homo sapiens (Human).